The sequence spans 264 residues: MILKTTGGSPHFNIALEEALLEESAEHGIAIARLWVNPDSIIVGYTSDVGREVNIEQARAEGVPVVRRISGGGAVFHDLGNMNVSVYIPRRLGVDEAYALVTSIILKTLHRLGIEGRVENGNDVAVGPWKVSGSAAAIRARATLAHATLLLTTDPSRIRRLVIPQLHRVERGEVTPVKYNPNSLERITGERMEVWQAARLLEESVKHALGEPENVGRDILQEAVIRARELCKTKYSQKGFWSPLGLGACREPQVAPMTSPSYVL.

The BPL/LPL catalytic domain maps to 26–213 (EHGIAIARLW…SVKHALGEPE (188 aa)). ATP is bound by residues Arg-68, 73 to 76 (GAVF), and Lys-130. Residue Lys-130 coordinates (R)-lipoate.

The protein belongs to the LplA family. In terms of assembly, monomer.

The protein resides in the cytoplasm. The catalysed reaction is L-lysyl-[lipoyl-carrier protein] + (R)-lipoate + ATP = N(6)-[(R)-lipoyl]-L-lysyl-[lipoyl-carrier protein] + AMP + diphosphate + H(+). The protein operates within protein modification; protein lipoylation via exogenous pathway; protein N(6)-(lipoyl)lysine from lipoate: step 1/2. It participates in protein modification; protein lipoylation via exogenous pathway; protein N(6)-(lipoyl)lysine from lipoate: step 2/2. Functionally, catalyzes both the ATP-dependent activation of exogenously supplied lipoate to lipoyl-AMP and the transfer of the activated lipoyl onto the lipoyl domains of lipoate-dependent enzymes. The chain is Putative lipoate-protein ligase A (lplA) from Aeropyrum pernix (strain ATCC 700893 / DSM 11879 / JCM 9820 / NBRC 100138 / K1).